Reading from the N-terminus, the 197-residue chain is 3-isopropylmalate dehydratase small subunit (197 aa).

This sequence belongs to the LeuD family. LeuD type 1 subfamily. Heterodimer of LeuC and LeuD.

The catalysed reaction is (2R,3S)-3-isopropylmalate = (2S)-2-isopropylmalate. The protein operates within amino-acid biosynthesis; L-leucine biosynthesis; L-leucine from 3-methyl-2-oxobutanoate: step 2/4. In terms of biological role, catalyzes the isomerization between 2-isopropylmalate and 3-isopropylmalate, via the formation of 2-isopropylmaleate. The sequence is that of 3-isopropylmalate dehydratase small subunit from Mycobacterium sp. (strain JLS).